The following is a 49-amino-acid chain: Large ribosomal subunit protein bL33 (49 aa).

This sequence belongs to the bacterial ribosomal protein bL33 family.

The polypeptide is Large ribosomal subunit protein bL33 (Desulfitobacterium hafniense (strain Y51)).